A 210-amino-acid polypeptide reads, in one-letter code: Orotate phosphoribosyltransferase (210 aa).

5-phospho-alpha-D-ribose 1-diphosphate is bound by residues Arg94, Lys98, His100, and 120 to 128; that span reads EDLISTGGS. Ser124 is a binding site for orotate.

Belongs to the purine/pyrimidine phosphoribosyltransferase family. PyrE subfamily. As to quaternary structure, homodimer. Mg(2+) is required as a cofactor.

It catalyses the reaction orotidine 5'-phosphate + diphosphate = orotate + 5-phospho-alpha-D-ribose 1-diphosphate. Its pathway is pyrimidine metabolism; UMP biosynthesis via de novo pathway; UMP from orotate: step 1/2. Its function is as follows. Catalyzes the transfer of a ribosyl phosphate group from 5-phosphoribose 1-diphosphate to orotate, leading to the formation of orotidine monophosphate (OMP). This Bacillus cereus (strain ATCC 10987 / NRS 248) protein is Orotate phosphoribosyltransferase.